The primary structure comprises 282 residues: Small ribosomal subunit protein uS2 (282 aa).

Positions 245-265 (AEEAVEELPLPTGEAQDEASS) are disordered.

The protein belongs to the universal ribosomal protein uS2 family.

The protein is Small ribosomal subunit protein uS2 of Chlamydia trachomatis serovar A (strain ATCC VR-571B / DSM 19440 / HAR-13).